The chain runs to 218 residues: Thiopurine S-methyltransferase (218 aa).

Residues tryptophan 10, leucine 45, glutamate 66, and arginine 123 each coordinate S-adenosyl-L-methionine.

Belongs to the class I-like SAM-binding methyltransferase superfamily. TPMT family.

The protein localises to the cytoplasm. The catalysed reaction is S-adenosyl-L-methionine + a thiopurine = S-adenosyl-L-homocysteine + a thiopurine S-methylether.. The chain is Thiopurine S-methyltransferase from Shewanella baltica (strain OS185).